We begin with the raw amino-acid sequence, 104 residues long: Circadian clock oscillator protein KaiB (104 aa).

It belongs to the KaiB family. The KaiABC complex composition changes during the circadian cycle to control KaiC phosphorylation. Complexes KaiC(6), KaiA(2-4):KaiC(6), KaiB(6):KaiC(6) and KaiC(6):KaiB(6):KaiA(12) are among the most important forms, many form cooperatively. Undergoes a major conformational rearrangment; in the free state forms homotetramers as a dimer of dimers. When bound to the CI domain of KaiC switches to a monomeric thioredoxin-fold (KaiB(fs)). KaiB(fs) binds CikA, leading it to dephosphorylate phospho-RpaA.

Its function is as follows. Key component of the KaiABC oscillator complex, which constitutes the main circadian regulator in cyanobacteria. Complex composition changes during the circadian cycle to control KaiC phosphorylation. KaiA stimulates KaiC autophosphorylation, while KaiB sequesters KaiA, leading to KaiC autodephosphorylation. Phospho-Ser-431 KaiC accumulation triggers binding of KaiB to form the KaiB(6):KaiC(6) complex, leading to changes in output regulators CikA and SasA. KaiB switches to a thioredoxin-like fold (KaiB(fs)) when bound to KaiC. KaiB(6):KaiC(6) formation exposes a site for KaiA binding that sequesters KaiA from KaiC, making the KaiC(6):KaiB(6):KaiA(12) complex that results in KaiC autodephosphorylation. A metamorphic protein which reversibly switches between an inactive tetrameric fold and a rare, thioredoxin-like monomeric fold (KaiB(fs)). KaiB(fs) binds phospho-KaiC, KaiA and CikA. KaiA and CikA compete for binding to KaiB(fs), and KaiB(fs) and SasA compete for binding to KaiC, thus the clock oscillator and output signal pathway are tightly coupled. The polypeptide is Circadian clock oscillator protein KaiB (Rippkaea orientalis (strain PCC 8801 / RF-1) (Cyanothece sp. (strain PCC 8801))).